The following is a 123-amino-acid chain: Large ribosomal subunit protein uL18 (123 aa).

This sequence belongs to the universal ribosomal protein uL18 family. Part of the 50S ribosomal subunit; part of the 5S rRNA/L5/L18/L25 subcomplex. Contacts the 5S and 23S rRNAs.

Its function is as follows. This is one of the proteins that bind and probably mediate the attachment of the 5S RNA into the large ribosomal subunit, where it forms part of the central protuberance. The sequence is that of Large ribosomal subunit protein uL18 from Wolbachia pipientis subsp. Culex pipiens (strain wPip).